We begin with the raw amino-acid sequence, 398 residues long: Phosphoglycerate kinase (398 aa).

Substrate-binding positions include 21–23, R36, 59–62, R119, and R157; these read DFN and HLGR. ATP is bound by residues K208, G296, E327, and 354-357; that span reads GGDS.

The protein belongs to the phosphoglycerate kinase family. As to quaternary structure, monomer.

The protein resides in the cytoplasm. It catalyses the reaction (2R)-3-phosphoglycerate + ATP = (2R)-3-phospho-glyceroyl phosphate + ADP. It functions in the pathway carbohydrate degradation; glycolysis; pyruvate from D-glyceraldehyde 3-phosphate: step 2/5. The chain is Phosphoglycerate kinase from Streptococcus pneumoniae (strain Taiwan19F-14).